Reading from the N-terminus, the 442-residue chain is tRNA modification GTPase MnmE (442 aa).

Positions 21, 79, and 118 each coordinate (6S)-5-formyl-5,6,7,8-tetrahydrofolate. Positions Gly-214–Asn-367 constitute a TrmE-type G domain. Asn-224 lines the K(+) pocket. GTP is bound by residues Asn-224–Ser-229, Ser-243–Thr-249, and Asp-268–Gly-271. Ser-228 serves as a coordination point for Mg(2+). The K(+) site is built by Ser-243, Ile-245, and Thr-248. Thr-249 contributes to the Mg(2+) binding site. Lys-442 is a (6S)-5-formyl-5,6,7,8-tetrahydrofolate binding site.

The protein belongs to the TRAFAC class TrmE-Era-EngA-EngB-Septin-like GTPase superfamily. TrmE GTPase family. As to quaternary structure, homodimer. Heterotetramer of two MnmE and two MnmG subunits. Requires K(+) as cofactor.

The protein localises to the cytoplasm. Exhibits a very high intrinsic GTPase hydrolysis rate. Involved in the addition of a carboxymethylaminomethyl (cmnm) group at the wobble position (U34) of certain tRNAs, forming tRNA-cmnm(5)s(2)U34. In Campylobacter jejuni subsp. jejuni serotype O:2 (strain ATCC 700819 / NCTC 11168), this protein is tRNA modification GTPase MnmE.